A 275-amino-acid chain; its full sequence is Probable siderophore transport system ATP-binding protein YusV (275 aa).

The ABC transporter domain occupies 6 to 242 (ISTETLSLGY…DLVQNVFSMN (237 aa)). 38–45 (GSNGCGKS) serves as a coordination point for ATP.

Belongs to the ABC transporter superfamily. In terms of assembly, the iron-hydroxamate siderophore complex is composed of one ATP-binding protein (YusV), two transmembrane proteins (YfiZ and YfhA) and a solute-binding protein (YfiY); the catechoplate siderophore complex is composed of one ATP-binding protein (YusV), two transmembrane proteins (FeuB and FeuC) and a solute-binding protein (FeuA).

It localises to the cell membrane. In terms of biological role, provides the ATPase subunit for at least 2 ABC transporter complexes; YfiYZ/YfhA/YusV involved in import of the iron-hydroxamate siderophores schizokinen, arthrobactin and corprogen, and FeuABC/YusV involved in import of the catecholate siderophores bacillibactin and enterobactin. Probably responsible for energy coupling to the transport system. The protein is Probable siderophore transport system ATP-binding protein YusV (yusV) of Bacillus subtilis (strain 168).